Reading from the N-terminus, the 21-residue chain is Phenol-soluble modulin alpha 2 peptide (21 aa).

It belongs to the phenol-soluble modulin alpha peptides family.

Its function is as follows. Peptide which can recruit, activate and subsequently lyse human neutrophils, thus eliminating the main cellular defense against infection. This chain is Phenol-soluble modulin alpha 2 peptide (psmA2), found in Staphylococcus aureus (strain USA300 / TCH1516).